We begin with the raw amino-acid sequence, 278 residues long: 2-dehydro-3-deoxyphosphooctonate aldolase (278 aa).

Belongs to the KdsA family.

It localises to the cytoplasm. The enzyme catalyses D-arabinose 5-phosphate + phosphoenolpyruvate + H2O = 3-deoxy-alpha-D-manno-2-octulosonate-8-phosphate + phosphate. It functions in the pathway carbohydrate biosynthesis; 3-deoxy-D-manno-octulosonate biosynthesis; 3-deoxy-D-manno-octulosonate from D-ribulose 5-phosphate: step 2/3. Its pathway is bacterial outer membrane biogenesis; lipopolysaccharide biosynthesis. The sequence is that of 2-dehydro-3-deoxyphosphooctonate aldolase from Bartonella quintana (strain Toulouse) (Rochalimaea quintana).